Here is a 302-residue protein sequence, read N- to C-terminus: ATP synthase gamma chain (302 aa).

The protein belongs to the ATPase gamma chain family. In terms of assembly, F-type ATPases have 2 components, CF(1) - the catalytic core - and CF(0) - the membrane proton channel. CF(1) has five subunits: alpha(3), beta(3), gamma(1), delta(1), epsilon(1). CF(0) has three main subunits: a, b and c.

Its subcellular location is the cell membrane. Produces ATP from ADP in the presence of a proton gradient across the membrane. The gamma chain is believed to be important in regulating ATPase activity and the flow of protons through the CF(0) complex. The chain is ATP synthase gamma chain from Enterococcus faecalis (strain ATCC 700802 / V583).